A 600-amino-acid polypeptide reads, in one-letter code: UvrABC system protein C (600 aa).

Positions 15–100 constitute a GIY-YIG domain; sequence NSTGVYQYFN…IKQLHPKYNI (86 aa). The 36-residue stretch at 203 to 238 folds into the UVR domain; the sequence is SVLLKNLEKQMLVLAQNENYEEAAKVRDQIAMIKDL.

This sequence belongs to the UvrC family. Interacts with UvrB in an incision complex.

The protein resides in the cytoplasm. Its function is as follows. The UvrABC repair system catalyzes the recognition and processing of DNA lesions. UvrC both incises the 5' and 3' sides of the lesion. The N-terminal half is responsible for the 3' incision and the C-terminal half is responsible for the 5' incision. The sequence is that of UvrABC system protein C from Campylobacter jejuni subsp. jejuni serotype O:2 (strain ATCC 700819 / NCTC 11168).